Here is a 230-residue protein sequence, read N- to C-terminus: Heptaprenylglyceryl phosphate synthase (230 aa).

Lys-12 is a binding site for sn-glycerol 1-phosphate. Mg(2+)-binding residues include Asp-14 and Thr-40. Residues 159–164 (YIEYSG), Gly-189, and 209–210 (GD) each bind sn-glycerol 1-phosphate.

Belongs to the GGGP/HepGP synthase family. Group I subfamily. In terms of assembly, homodimer. It depends on Mg(2+) as a cofactor.

It catalyses the reaction sn-glycerol 1-phosphate + all-trans-heptaprenyl diphosphate = 3-heptaprenyl-sn-glycero-1-phosphate + diphosphate. The protein operates within membrane lipid metabolism; glycerophospholipid metabolism. In terms of biological role, prenyltransferase that catalyzes in vivo the transfer of the heptaprenyl moiety of heptaprenyl pyrophosphate (HepPP; 35 carbon atoms) to the C3 hydroxyl of sn-glycerol-1-phosphate (G1P), producing heptaprenylglyceryl phosphate (HepGP). This reaction is an ether-bond-formation step in the biosynthesis of archaea-type G1P-based membrane lipids found in Bacillales. To a much lesser extent, is also able to use geranylgeranyl diphosphate (GGPP; C20) as the prenyl donor. The sequence is that of Heptaprenylglyceryl phosphate synthase from Staphylococcus aureus (strain NCTC 8325 / PS 47).